Reading from the N-terminus, the 483-residue chain is MPPSPLDDRVVVALSRPVRPQDLNLCLDSSYLGSASPGSGSHAPVLATAVVTLKAANLTYMPSSSGSARSLNCGCSSTSCCTVATYDKDHQAQTQAIAAGTATTAIGTSTTCPANQMVNNNENTGSVLSPSGGVGSPVSGTPKQLASIKIIYPNDLAKKMTKCSKSHLPSQGPVIIDCRPFMEYNKSHIQGAVHINCADKISRRRLQQGKITVLDLISCREGKDSFKRIFSKEIIVYDENTNEPSRVTPSQPLHIVLESLKREGKEPLVLKGGLSSFKQNHGNLCDNSLQLQECREVGGGASAASSMLPQSVPTTPDIENAELTPILPFLFLGNEQDAQDLDTMQRLNIGYVINVTTHLPLYHYEKGLFNYKRLPATDSNKQNLRQYFEEAFEFIEEAHQCGKGLLIHCQAGVSRSATIVIAYLMKHTRMTMTDAYKFVKGKRPIISPNLNFMGQLLEFEEDLNNGVTPRILTPKLMGMETVV.

In terms of domain architecture, Rhodanese spans 169–286 (PSQGPVIIDC…FKQNHGNLCD (118 aa)). An interaction with MAP kinases region spans residues 200–216 (KISRRRLQQGKITVLDL). Residues 322–465 (ELTPILPFLF…LLEFEEDLNN (144 aa)) form the Tyrosine-protein phosphatase domain. Cys409 (phosphocysteine intermediate) is an active-site residue.

The protein belongs to the protein-tyrosine phosphatase family. Non-receptor class dual specificity subfamily. As to quaternary structure, monomer. Interacts with MAPK14.

The protein resides in the cytoplasm. It is found in the nucleus. It catalyses the reaction O-phospho-L-tyrosyl-[protein] + H2O = L-tyrosyl-[protein] + phosphate. The catalysed reaction is O-phospho-L-seryl-[protein] + H2O = L-seryl-[protein] + phosphate. It carries out the reaction O-phospho-L-threonyl-[protein] + H2O = L-threonyl-[protein] + phosphate. Functionally, protein phosphatase involved in the inactivation of MAP kinases. Has a specificity for the MAPK11/MAPK12/MAPK13/MAPK14 subfamily. It preferably dephosphorylates p38. The polypeptide is Dual specificity protein phosphatase 10 (Dusp10) (Mus musculus (Mouse)).